We begin with the raw amino-acid sequence, 81 residues long: uncharacterized protein (81 aa).

Helical transmembrane passes span I4–T24 and N61–I81.

The protein resides in the cell membrane. This is an uncharacterized protein from Bacillus subtilis (strain 168).